A 120-amino-acid chain; its full sequence is Small ribosomal subunit protein uS13 (120 aa).

The segment at 92 to 120 (HRKGLPVRGQTTKNNARTRKGKKKTVGSK) is disordered. The segment covering 107-120 (ARTRKGKKKTVGSK) has biased composition (basic residues).

This sequence belongs to the universal ribosomal protein uS13 family. In terms of assembly, part of the 30S ribosomal subunit. Forms a loose heterodimer with protein S19. Forms two bridges to the 50S subunit in the 70S ribosome.

Its function is as follows. Located at the top of the head of the 30S subunit, it contacts several helices of the 16S rRNA. In the 70S ribosome it contacts the 23S rRNA (bridge B1a) and protein L5 of the 50S subunit (bridge B1b), connecting the 2 subunits; these bridges are implicated in subunit movement. Contacts the tRNAs in the A and P-sites. The polypeptide is Small ribosomal subunit protein uS13 (Helicobacter hepaticus (strain ATCC 51449 / 3B1)).